Consider the following 301-residue polypeptide: 2-oxo-3-(phosphooxy)propyl 3-oxoalkanoate synthase (301 aa).

The protein belongs to the AfsA family.

It catalyses the reaction a medium-chain 3-oxoacyl-[ACP] + dihydroxyacetone phosphate = a (4-alkanoyl-5-oxo-2,5-dihydrofuran-3-yl)methyl phosphate + holo-[ACP] + H2O. In terms of biological role, involved in the biosynthesis of A factor (2-isocapryloyl-3R-hydroxymethyl-gamma-butyrolactone), a gamma-butyrolactone autoregulator that triggers secondary metabolism and morphogenesis in Streptomyces. Catalyzes beta-ketoacyl transfer from 8-methyl-3-oxononanoyl-acyl carrier protein (ACP) to the hydroxyl group of dihydroxyacetone phosphate (DHAP), thus producing an 8-methyl-3-oxononanoyl-DHAP ester. The chain is 2-oxo-3-(phosphooxy)propyl 3-oxoalkanoate synthase from Streptomyces griseus.